The chain runs to 224 residues: Artemin (224 aa).

An N-terminal signal peptide occupies residues 1-39 (MELGLAEPTALSHCLRPRWQSAWWPTLAVLALLSCVTEA). Residues 40–111 (SLDPMSRSPA…AALRGARAAR (72 aa)) constitute a propeptide that is removed on maturation. The tract at residues 43–124 (PMSRSPAARD…RSSRARTTDA (82 aa)) is disordered. The segment covering 80 to 95 (RPPPQSPQPAPPPPGP) has biased composition (pro residues). Residues 96–116 (ALQSPPAALRGARAARAGTRS) show a composition bias toward low complexity. 3 disulfide bridges follow: Cys127-Cys192, Cys154-Cys220, and Cys158-Cys222. An N-linked (GlcNAc...) asparagine glycan is attached at Asn206.

This sequence belongs to the TGF-beta family. GDNF subfamily. In terms of assembly, homodimer; disulfide-linked. Interacts with GFRA3 coreceptor and RET: forms a 2:2:2 ternary complex composed of ARTN ligand, GFRA3 and RET receptor.

The protein localises to the secreted. Growth factor that supports the survival of sensory and sympathetic peripheral neurons in culture and also supports the survival of dopaminergic neurons of the ventral mid-brain. Acts by binding to its coreceptor, GFRA3, leading to autophosphorylation and activation of the RET receptor. Strong attractant of gut hematopoietic cells thus promoting the formation Peyer's patch-like structures, a major component of the gut-associated lymphoid tissue. The polypeptide is Artemin (Mus musculus (Mouse)).